A 290-amino-acid chain; its full sequence is Lipoyl synthase (290 aa).

Positions 44, 49, 55, 70, 74, 77, and 282 each coordinate [4Fe-4S] cluster. In terms of domain architecture, Radical SAM core spans 56–271 (WGEGTATFMI…ELLGKEMGFR (216 aa)).

The protein belongs to the radical SAM superfamily. Lipoyl synthase family. Requires [4Fe-4S] cluster as cofactor.

The protein resides in the cytoplasm. It carries out the reaction [[Fe-S] cluster scaffold protein carrying a second [4Fe-4S](2+) cluster] + N(6)-octanoyl-L-lysyl-[protein] + 2 oxidized [2Fe-2S]-[ferredoxin] + 2 S-adenosyl-L-methionine + 4 H(+) = [[Fe-S] cluster scaffold protein] + N(6)-[(R)-dihydrolipoyl]-L-lysyl-[protein] + 4 Fe(3+) + 2 hydrogen sulfide + 2 5'-deoxyadenosine + 2 L-methionine + 2 reduced [2Fe-2S]-[ferredoxin]. It participates in protein modification; protein lipoylation via endogenous pathway; protein N(6)-(lipoyl)lysine from octanoyl-[acyl-carrier-protein]: step 2/2. Its function is as follows. Catalyzes the radical-mediated insertion of two sulfur atoms into the C-6 and C-8 positions of the octanoyl moiety bound to the lipoyl domains of lipoate-dependent enzymes, thereby converting the octanoylated domains into lipoylated derivatives. The sequence is that of Lipoyl synthase from Flavobacterium psychrophilum (strain ATCC 49511 / DSM 21280 / CIP 103535 / JIP02/86).